The sequence spans 429 residues: Enolase (429 aa).

Residue glutamine 162 participates in (2R)-2-phosphoglycerate binding. Glutamate 204 acts as the Proton donor in catalysis. 3 residues coordinate Mg(2+): aspartate 241, glutamate 283, and aspartate 310. (2R)-2-phosphoglycerate-binding residues include lysine 335, arginine 364, serine 365, and lysine 386. Lysine 335 functions as the Proton acceptor in the catalytic mechanism.

It belongs to the enolase family. Mg(2+) serves as cofactor.

Its subcellular location is the cytoplasm. The protein resides in the secreted. It localises to the cell surface. The enzyme catalyses (2R)-2-phosphoglycerate = phosphoenolpyruvate + H2O. It participates in carbohydrate degradation; glycolysis; pyruvate from D-glyceraldehyde 3-phosphate: step 4/5. Its function is as follows. Catalyzes the reversible conversion of 2-phosphoglycerate (2-PG) into phosphoenolpyruvate (PEP). It is essential for the degradation of carbohydrates via glycolysis. The chain is Enolase from Mycolicibacterium gilvum (strain PYR-GCK) (Mycobacterium gilvum (strain PYR-GCK)).